We begin with the raw amino-acid sequence, 980 residues long: Probable outer membrane protein PmpH (980 aa).

Residues 1–24 (MPFSLRSTSFCFLACLCSYSYGLA) form the signal peptide. In terms of domain architecture, Autotransporter spans 661-980 (GELVPNSLWV…FVSLGLNRIF (320 aa)).

This sequence belongs to the PMP outer membrane protein family.

It is found in the secreted. It localises to the cell wall. The protein resides in the cell outer membrane. This is Probable outer membrane protein PmpH (pmpH) from Chlamydia muridarum (strain MoPn / Nigg).